Here is a 135-residue protein sequence, read N- to C-terminus: UPF0355 protein MRSA252 (135 aa).

It belongs to the UPF0355 family.

In Staphylococcus aureus (strain MRSA252), this protein is UPF0355 protein MRSA252.